The primary structure comprises 407 residues: 1-deoxy-D-xylulose 5-phosphate reductoisomerase (407 aa).

Positions 25, 26, 27, 28, 53, and 136 each coordinate NADPH. Lysine 137 is a 1-deoxy-D-xylulose 5-phosphate binding site. Glutamate 138 contacts NADPH. Aspartate 162 contacts Mn(2+). Serine 163, glutamate 164, serine 188, and histidine 211 together coordinate 1-deoxy-D-xylulose 5-phosphate. A Mn(2+)-binding site is contributed by glutamate 164. Residue glycine 217 coordinates NADPH. Residues serine 224, asparagine 229, lysine 230, and glutamate 233 each coordinate 1-deoxy-D-xylulose 5-phosphate. Mn(2+) is bound at residue glutamate 233.

It belongs to the DXR family. The cofactor is Mg(2+). It depends on Mn(2+) as a cofactor.

It carries out the reaction 2-C-methyl-D-erythritol 4-phosphate + NADP(+) = 1-deoxy-D-xylulose 5-phosphate + NADPH + H(+). The protein operates within isoprenoid biosynthesis; isopentenyl diphosphate biosynthesis via DXP pathway; isopentenyl diphosphate from 1-deoxy-D-xylulose 5-phosphate: step 1/6. Functionally, catalyzes the NADPH-dependent rearrangement and reduction of 1-deoxy-D-xylulose-5-phosphate (DXP) to 2-C-methyl-D-erythritol 4-phosphate (MEP). This Rhodopseudomonas palustris (strain BisB18) protein is 1-deoxy-D-xylulose 5-phosphate reductoisomerase.